The chain runs to 292 residues: Homoserine kinase (292 aa).

Position 84-94 (84-94 (PLSRGLGSSSA)) interacts with ATP.

Belongs to the GHMP kinase family. Homoserine kinase subfamily.

The protein localises to the cytoplasm. It catalyses the reaction L-homoserine + ATP = O-phospho-L-homoserine + ADP + H(+). Its pathway is amino-acid biosynthesis; L-threonine biosynthesis; L-threonine from L-aspartate: step 4/5. In terms of biological role, catalyzes the ATP-dependent phosphorylation of L-homoserine to L-homoserine phosphate. The protein is Homoserine kinase of Campylobacter jejuni subsp. jejuni serotype O:2 (strain ATCC 700819 / NCTC 11168).